The following is a 122-amino-acid chain: Large ribosomal subunit protein uL14c (122 aa).

This sequence belongs to the universal ribosomal protein uL14 family. In terms of assembly, part of the 50S ribosomal subunit.

Its subcellular location is the plastid. Its function is as follows. Binds to 23S rRNA. The sequence is that of Large ribosomal subunit protein uL14c from Cuscuta obtusiflora (Peruvian dodder).